Reading from the N-terminus, the 1252-residue chain is Immunoglobulin superfamily DCC subclass member 4 (1252 aa).

An N-terminal signal peptide occupies residues 1 to 22; it reads MARADTGRGLLVLTFCLLSARG. At 23-956 the chain is on the extracellular side; sequence ELPLPQETTV…SDSLDVHAVT (934 aa). 4 Ig-like domains span residues 27–136, 142–228, 241–329, and 334–420; these read PQET…VAVV, EDFS…ASLT, QDVV…AELR, and PAIS…APLA. Disulfide bonds link Cys55–Cys120 and Cys163–Cys211. An N-linked (GlcNAc...) asparagine glycan is attached at Asn88. Asn251 carries N-linked (GlcNAc...) asparagine glycosylation. Intrachain disulfides connect Cys264–Cys311 and Cys355–Cys404. Fibronectin type-III domains follow at residues 430 to 524, 526 to 622, 631 to 742, 751 to 844, and 849 to 944; these read APTR…TLDD, PSAA…TPGV, APAE…TPDL, PPAH…TLPD, and PPSD…TLQK. The interval 669-688 is disordered; sequence TEEEADGDRPPGGRGDQAWD. A helical transmembrane segment spans residues 957–977; that stretch reads GIIVGVCLGLLCLLACMCAGL. Residues 978–1252 are Cytoplasmic-facing; sequence RRSSHREALP…RAPVSSAQVP (275 aa). At Thr994 the chain carries Phosphothreonine.

The protein belongs to the immunoglobulin superfamily. DCC family. In terms of tissue distribution, expressed in skeletal muscle, heart and brain. Brain expression is hippocampus-specific.

The protein localises to the cell membrane. The chain is Immunoglobulin superfamily DCC subclass member 4 (Igdcc4) from Mus musculus (Mouse).